The following is a 225-amino-acid chain: ATP-dependent Clp protease proteolytic subunit (225 aa).

Residue S101 is the Nucleophile of the active site. H126 is a catalytic residue.

This sequence belongs to the peptidase S14 family. In terms of assembly, component of the chloroplastic Clp protease core complex.

The protein resides in the plastid. It localises to the chloroplast stroma. The catalysed reaction is Hydrolysis of proteins to small peptides in the presence of ATP and magnesium. alpha-casein is the usual test substrate. In the absence of ATP, only oligopeptides shorter than five residues are hydrolyzed (such as succinyl-Leu-Tyr-|-NHMec, and Leu-Tyr-Leu-|-Tyr-Trp, in which cleavage of the -Tyr-|-Leu- and -Tyr-|-Trp bonds also occurs).. In terms of biological role, cleaves peptides in various proteins in a process that requires ATP hydrolysis. Has a chymotrypsin-like activity. Plays a major role in the degradation of misfolded proteins. This Chlorokybus atmophyticus (Soil alga) protein is ATP-dependent Clp protease proteolytic subunit.